Consider the following 590-residue polypeptide: Aspartate--tRNA(Asp/Asn) ligase (590 aa).

Glutamate 172 is an L-aspartate binding site. The aspartate stretch occupies residues 196-199; the sequence is QLFK. Residue arginine 218 participates in L-aspartate binding. ATP contacts are provided by residues 218–220 and glutamine 227; that span reads RDE. Histidine 449 is an L-aspartate binding site. Residue glutamate 484 participates in ATP binding. Residue arginine 491 coordinates L-aspartate. 536-539 contributes to the ATP binding site; the sequence is GVDR.

This sequence belongs to the class-II aminoacyl-tRNA synthetase family. Type 1 subfamily. As to quaternary structure, homodimer.

It localises to the cytoplasm. It catalyses the reaction tRNA(Asx) + L-aspartate + ATP = L-aspartyl-tRNA(Asx) + AMP + diphosphate. Its function is as follows. Aspartyl-tRNA synthetase with relaxed tRNA specificity since it is able to aspartylate not only its cognate tRNA(Asp) but also tRNA(Asn). Reaction proceeds in two steps: L-aspartate is first activated by ATP to form Asp-AMP and then transferred to the acceptor end of tRNA(Asp/Asn). This is Aspartate--tRNA(Asp/Asn) ligase from Francisella tularensis subsp. holarctica (strain FTNF002-00 / FTA).